A 141-amino-acid polypeptide reads, in one-letter code: NADPH-dependent 7-cyano-7-deazaguanine reductase (141 aa).

Cys-34 serves as the catalytic Thioimide intermediate. Asp-41 (proton donor) is an active-site residue. Substrate contacts are provided by residues Val-56 to Leu-58 and His-75 to Glu-76.

The protein belongs to the GTP cyclohydrolase I family. QueF type 1 subfamily.

Its subcellular location is the cytoplasm. The catalysed reaction is 7-aminomethyl-7-carbaguanine + 2 NADP(+) = 7-cyano-7-deazaguanine + 2 NADPH + 3 H(+). The protein operates within tRNA modification; tRNA-queuosine biosynthesis. Catalyzes the NADPH-dependent reduction of 7-cyano-7-deazaguanine (preQ0) to 7-aminomethyl-7-deazaguanine (preQ1). This Acidithiobacillus ferrooxidans (strain ATCC 23270 / DSM 14882 / CIP 104768 / NCIMB 8455) (Ferrobacillus ferrooxidans (strain ATCC 23270)) protein is NADPH-dependent 7-cyano-7-deazaguanine reductase.